A 1245-amino-acid chain; its full sequence is ATP-dependent helicase/nuclease subunit A (1245 aa).

In terms of domain architecture, UvrD-like helicase ATP-binding spans 4 to 477; sequence TKWTDEQLSA…IQLYKNFRSR (474 aa). 25-32 contributes to the ATP binding site; it reads AAAGSGKT. The 299-residue stretch at 517-815 folds into the UvrD-like helicase C-terminal domain; that stretch reads KFKDTIVGGP…RIMSIHKSKG (299 aa).

This sequence belongs to the helicase family. AddA subfamily. Heterodimer of AddA and AddB/RexB. Mg(2+) is required as a cofactor.

The catalysed reaction is Couples ATP hydrolysis with the unwinding of duplex DNA by translocating in the 3'-5' direction.. It catalyses the reaction ATP + H2O = ADP + phosphate + H(+). Its function is as follows. The heterodimer acts as both an ATP-dependent DNA helicase and an ATP-dependent, dual-direction single-stranded exonuclease. Recognizes the chi site generating a DNA molecule suitable for the initiation of homologous recombination. The AddA nuclease domain is required for chi fragment generation; this subunit has the helicase and 3' -&gt; 5' nuclease activities. The polypeptide is ATP-dependent helicase/nuclease subunit A (Clostridium beijerinckii (strain ATCC 51743 / NCIMB 8052) (Clostridium acetobutylicum)).